The primary structure comprises 629 residues: Polyadenylate-binding protein, cytoplasmic and nuclear (629 aa).

Positions 1–47 (MTLENKAEASPATKEETTTEAAPAEGEAKTESSEEKGSKEDQGDNAS) are disordered. Residues 26–42 (GEAKTESSEEKGSKEDQ) show a composition bias toward basic and acidic residues. RRM domains are found at residues 46–124 (ASLY…WSQR), 134–211 (GNIY…PHVP), 227–304 (TNVF…RAKK), and 330–407 (VNLY…LAQR). The interval 465–543 (GANPQMMMRP…RRKDGESRVA (79 aa)) is disordered. 2 stretches are compositionally biased toward low complexity: residues 493–506 (MYGA…QGGF) and 514–531 (GGQP…QFRG). The region spanning 542 to 624 (VADSISNALE…AITAYNEYLN (83 aa)) is the PABC domain.

This sequence belongs to the polyadenylate-binding protein type-1 family.

The protein localises to the cytoplasm. Its subcellular location is the nucleus. In terms of biological role, binds the poly(A) tail of mRNA. Appears to be an important mediator of the multiple roles of the poly(A) tail in mRNA biogenesis, stability and translation. In the nucleus, involved in both mRNA cleavage and polyadenylation. Is also required for efficient mRNA export to the cytoplasm. Acts in concert with a poly(A)-specific nuclease (PAN) to affect poly(A) tail shortening, which may occur concomitantly with either nucleocytoplasmic mRNA transport or translational initiation. In the cytoplasm, stimulates translation initiation and regulates mRNA decay through translation termination-coupled poly(A) shortening, probably mediated by PAN. The protein is Polyadenylate-binding protein, cytoplasmic and nuclear (PAB1) of Yarrowia lipolytica (strain CLIB 122 / E 150) (Yeast).